The chain runs to 122 residues: Spermidine export protein MdtJ (122 aa).

Transmembrane regions (helical) follow at residues 1 to 21 (MIYWIFLGLAIATEIIGTLSM), 31 to 51 (TGHIVMYVMITASYVMLSMAV), 54 to 74 (VALGVAYALWEGIGILFITLF), and 81 to 101 (EPISALKVLGLVTLIVGIMLV).

This sequence belongs to the drug/metabolite transporter (DMT) superfamily. Small multidrug resistance (SMR) (TC 2.A.7.1) family. MdtJ subfamily. In terms of assembly, forms a complex with MdtI.

It is found in the cell inner membrane. In terms of biological role, catalyzes the excretion of spermidine. This Serratia proteamaculans (strain 568) protein is Spermidine export protein MdtJ.